Reading from the N-terminus, the 365-residue chain is Succinate--CoA ligase [ADP-forming] subunit beta (365 aa).

An ATP-grasp domain is found at 9–230; it reads KEIFRAEGIS…EMEEYEPEEF (222 aa). Residues K45, 52 to 54, E90, I93, and E98 contribute to the ATP site; that span reads GRG. Residues N190 and D203 each contribute to the Mg(2+) site. Residues N244 and 300 to 302 each bind substrate; that span reads GIT.

It belongs to the succinate/malate CoA ligase beta subunit family. In terms of assembly, heterotetramer of two alpha and two beta subunits. Mg(2+) serves as cofactor.

It carries out the reaction succinate + ATP + CoA = succinyl-CoA + ADP + phosphate. The enzyme catalyses GTP + succinate + CoA = succinyl-CoA + GDP + phosphate. The protein operates within carbohydrate metabolism; tricarboxylic acid cycle; succinate from succinyl-CoA (ligase route): step 1/1. In terms of biological role, succinyl-CoA synthetase functions in the citric acid cycle (TCA), coupling the hydrolysis of succinyl-CoA to the synthesis of either ATP or GTP and thus represents the only step of substrate-level phosphorylation in the TCA. The beta subunit provides nucleotide specificity of the enzyme and binds the substrate succinate, while the binding sites for coenzyme A and phosphate are found in the alpha subunit. In Methanothermobacter thermautotrophicus (strain ATCC 29096 / DSM 1053 / JCM 10044 / NBRC 100330 / Delta H) (Methanobacterium thermoautotrophicum), this protein is Succinate--CoA ligase [ADP-forming] subunit beta.